The chain runs to 93 residues: Small ribosomal subunit protein uS19 (93 aa).

The protein belongs to the universal ribosomal protein uS19 family.

Its function is as follows. Protein S19 forms a complex with S13 that binds strongly to the 16S ribosomal RNA. The protein is Small ribosomal subunit protein uS19 of Synechococcus sp. (strain JA-2-3B'a(2-13)) (Cyanobacteria bacterium Yellowstone B-Prime).